A 401-amino-acid chain; its full sequence is Phosrestin-1 (401 aa).

This sequence belongs to the arrestin family.

Its function is as follows. Directly interacts with light-activated rhodopsin thereby activating the phosphorylation of metarhodopsin. Inhibits the dephosphorylation of metarhodopsin. The protein is Phosrestin-1 (ARR2) of Calliphora vicina (Blue blowfly).